Reading from the N-terminus, the 297-residue chain is Large ribosomal subunit protein uL15m (297 aa).

The transit peptide at 1 to 21 (MSGNGVHGVHGALQLLRSLPK) directs the protein to the mitochondrion. The segment at 23 to 69 (SLANLRPNPGSKKPERRRGRGRYRGRKCGRGHKGERQRGNRPRLGFE) is disordered. The segment covering 36 to 53 (PERRRGRGRYRGRKCGRG) has biased composition (basic residues).

It belongs to the universal ribosomal protein uL15 family. In terms of assembly, component of the mitochondrial ribosome large subunit (39S) which comprises a 16S rRNA and about 50 distinct proteins.

Its subcellular location is the mitochondrion. This Gallus gallus (Chicken) protein is Large ribosomal subunit protein uL15m (MRPL15).